Consider the following 336-residue polypeptide: HTH-type transcriptional regulator RafR (336 aa).

The region spanning S2–T55 is the HTH lacI-type domain. Positions L3–G22 form a DNA-binding region, H-T-H motif.

In terms of assembly, homodimer.

Functionally, repressor that negatively controls the expression of the raffinose (raf) operon by binding to the raf operator (rafO) DNA. Acts by binding to two operator sites, O1 and 02, which flank the -35 raf promoter box. RafR bound to 02 alone results in 45 % repression of transcription, whereas RafR bound to O1 leads to only 6% repression. The chain is HTH-type transcriptional regulator RafR from Escherichia coli.